Consider the following 486-residue polypeptide: MAGAARDRAFLDHFGGAGADRPCHVEGALMNDMSRQATRLDAIGGRYDPWLLGAAVTLASLGVVMVASSSIELEASPFYYLTRHLLFLGGGIALAFWAMRTELKTIEQHNQMLLLACFVLLVVVFVPGLGSTVNGAKRWINLGVSRFQVVESVKVFYIIWLASYLVRFRDEVNATWQAMLKPVFVVGLLVGLLLLQPDFGSSMLLLSVTACMLVLGGAPIGRIILPILLLLPALVALVIFEPYRMRRVTSFMDPWVDQLGSGYQLSNALMAIGRGQWTGVGLGASVQKLNYLPESHTDFIFSVIAEELGFVGVCGVIGLYALLVGRAFWLGMRCVEMKRHFSGYIAFGIGLWIAMQSFVSIGVNLGILPTKGLTLPLISSGGSSVLMTCLAMGVLLRVSYEADRAERLRSKLSPQGAAISPGEPAEPVVDAVPPAYAPARKPQRDTAAAPAPAAAPVAAHVAPASAILRGTSRMQPRVEPTFGRIA.

Over 1–50 (MAGAARDRAFLDHFGGAGADRPCHVEGALMNDMSRQATRLDAIGGRYDPW) the chain is Cytoplasmic. Residues 51–71 (LLGAAVTLASLGVVMVASSSI) form a helical membrane-spanning segment. Topologically, residues 72–77 (ELEASP) are periplasmic. The helical transmembrane segment at 78 to 98 (FYYLTRHLLFLGGGIALAFWA) threads the bilayer. At 99–112 (MRTELKTIEQHNQM) the chain is on the cytoplasmic side. A helical membrane pass occupies residues 113–133 (LLLACFVLLVVVFVPGLGSTV). The Periplasmic segment spans residues 134–141 (NGAKRWIN). A helical membrane pass occupies residues 142-162 (LGVSRFQVVESVKVFYIIWLA). At 163–174 (SYLVRFRDEVNA) the chain is on the cytoplasmic side. Residues 175–195 (TWQAMLKPVFVVGLLVGLLLL) form a helical membrane-spanning segment. At 196 to 199 (QPDF) the chain is on the periplasmic side. Residues 200-220 (GSSMLLLSVTACMLVLGGAPI) form a helical membrane-spanning segment. Topologically, residues 221–222 (GR) are cytoplasmic. The helical transmembrane segment at 223–243 (IILPILLLLPALVALVIFEPY) threads the bilayer. The Periplasmic portion of the chain corresponds to 244-298 (RMRRVTSFMDPWVDQLGSGYQLSNALMAIGRGQWTGVGLGASVQKLNYLPESHTD). Residues 299-319 (FIFSVIAEELGFVGVCGVIGL) form a helical membrane-spanning segment. Topologically, residues 320 to 342 (YALLVGRAFWLGMRCVEMKRHFS) are cytoplasmic. Residues 343 to 363 (GYIAFGIGLWIAMQSFVSIGV) form a helical membrane-spanning segment. Over 364 to 374 (NLGILPTKGLT) the chain is Periplasmic. Residues 375–395 (LPLISSGGSSVLMTCLAMGVL) form a helical membrane-spanning segment. The Cytoplasmic segment spans residues 396 to 486 (LRVSYEADRA…RVEPTFGRIA (91 aa)).

The protein belongs to the SEDS family. FtsW subfamily.

It is found in the cell inner membrane. The enzyme catalyses [GlcNAc-(1-&gt;4)-Mur2Ac(oyl-L-Ala-gamma-D-Glu-L-Lys-D-Ala-D-Ala)](n)-di-trans,octa-cis-undecaprenyl diphosphate + beta-D-GlcNAc-(1-&gt;4)-Mur2Ac(oyl-L-Ala-gamma-D-Glu-L-Lys-D-Ala-D-Ala)-di-trans,octa-cis-undecaprenyl diphosphate = [GlcNAc-(1-&gt;4)-Mur2Ac(oyl-L-Ala-gamma-D-Glu-L-Lys-D-Ala-D-Ala)](n+1)-di-trans,octa-cis-undecaprenyl diphosphate + di-trans,octa-cis-undecaprenyl diphosphate + H(+). The protein operates within cell wall biogenesis; peptidoglycan biosynthesis. In terms of biological role, peptidoglycan polymerase that is essential for cell division. This Xanthomonas oryzae pv. oryzae (strain KACC10331 / KXO85) protein is Probable peptidoglycan glycosyltransferase FtsW.